We begin with the raw amino-acid sequence, 205 residues long: Ras-like protein 3 (205 aa).

16 to 23 (GGGGVGKS) provides a ligand contact to GTP. The Effector region motif lies at 38 to 46 (YDPTIEDSY). GTP is bound by residues 63-67 (DTAGQ) and 122-125 (NKCD). Cys-202 carries the post-translational modification Cysteine methyl ester. A lipid anchor (S-farnesyl cysteine) is attached at Cys-202. A propeptide spans 203–205 (ILM) (removed in mature form).

It belongs to the small GTPase superfamily. Ras family.

The protein resides in the cell membrane. The enzyme catalyses GTP + H2O = GDP + phosphate + H(+). With respect to regulation, alternates between an inactive form bound to GDP and an active form bound to GTP. Activated by a guanine nucleotide-exchange factor (GEF) and inactivated by a GTPase-activating protein (GAP). This Mucor circinelloides f. lusitanicus (Mucor racemosus var. lusitanicus) protein is Ras-like protein 3 (RAS3).